Consider the following 178-residue polypeptide: Fatty-acid and retinol-binding protein 1 (178 aa).

A signal peptide spans 1–16; the sequence is MYHQLILLALIGTIMA. Coiled coils occupy residues 67–89 and 129–154; these read DAALEALKDKSDKLYKNAVELRN and IKQAARDIIAKYQALNEETKEELKVT.

It belongs to the fatty-acid and retinol-binding protein (FARBP) family. Post-translationally, not glycosylated.

Its subcellular location is the secreted. Functionally, binds retinol and different fatty acids. This Loa loa (Eye worm) protein is Fatty-acid and retinol-binding protein 1.